We begin with the raw amino-acid sequence, 96 residues long: Co-chaperonin GroES (96 aa).

Belongs to the GroES chaperonin family. In terms of assembly, heptamer of 7 subunits arranged in a ring. Interacts with the chaperonin GroEL.

It localises to the cytoplasm. In terms of biological role, together with the chaperonin GroEL, plays an essential role in assisting protein folding. The GroEL-GroES system forms a nano-cage that allows encapsulation of the non-native substrate proteins and provides a physical environment optimized to promote and accelerate protein folding. GroES binds to the apical surface of the GroEL ring, thereby capping the opening of the GroEL channel. The polypeptide is Co-chaperonin GroES (Actinobacillus pleuropneumoniae serotype 5b (strain L20)).